Consider the following 935-residue polypeptide: Isoleucine--tRNA ligase (935 aa).

The short motif at 58–68 is the 'HIGH' region element; it reads PYANGNLHLGH. An L-isoleucyl-5'-AMP-binding site is contributed by E559. The 'KMSKS' region motif lies at 600-604; sequence KMSKS. K603 serves as a coordination point for ATP. C898, C901, C918, and C921 together coordinate Zn(2+).

It belongs to the class-I aminoacyl-tRNA synthetase family. IleS type 1 subfamily. As to quaternary structure, monomer. Zn(2+) serves as cofactor.

The protein localises to the cytoplasm. It carries out the reaction tRNA(Ile) + L-isoleucine + ATP = L-isoleucyl-tRNA(Ile) + AMP + diphosphate. Catalyzes the attachment of isoleucine to tRNA(Ile). As IleRS can inadvertently accommodate and process structurally similar amino acids such as valine, to avoid such errors it has two additional distinct tRNA(Ile)-dependent editing activities. One activity is designated as 'pretransfer' editing and involves the hydrolysis of activated Val-AMP. The other activity is designated 'posttransfer' editing and involves deacylation of mischarged Val-tRNA(Ile). This chain is Isoleucine--tRNA ligase, found in Haemophilus ducreyi (strain 35000HP / ATCC 700724).